Consider the following 105-residue polypeptide: Small ribosomal subunit protein uS10 (105 aa).

The protein belongs to the universal ribosomal protein uS10 family. In terms of assembly, part of the 30S ribosomal subunit.

Functionally, involved in the binding of tRNA to the ribosomes. The sequence is that of Small ribosomal subunit protein uS10 from Francisella tularensis subsp. mediasiatica (strain FSC147).